The sequence spans 1325 residues: uncharacterized protein (1325 aa).

The N-terminal stretch at 1–18 (MNRIYRVIWNCTLQVFQA) is a signal peptide. Cys19 is lipidated: N-palmitoyl cysteine. Residue Cys19 is the site of S-diacylglycerol cysteine attachment.

This sequence to E.coli YfaL.

It localises to the cell membrane. This is an uncharacterized protein from Escherichia coli (strain K12).